Reading from the N-terminus, the 382-residue chain is Flap endonuclease 1-B (382 aa).

The segment at 1–104 is N-domain; it reads MGIHGLAKLI…GELAKRSERR (104 aa). D34 contributes to the Mg(2+) binding site. The DNA site is built by R47 and R70. 5 residues coordinate Mg(2+): D86, E158, E160, D179, and D181. Residues 122 to 253 form an I-domain region; that stretch reads NIEKFNKRLV…KRAIDLIRQH (132 aa). E158 serves as a coordination point for DNA. DNA-binding residues include G231 and D233. D233 is a Mg(2+) binding site. The segment at 336–344 is interaction with PCNA; sequence TQGRLDDFF. The tract at residues 352–382 is disordered; that stretch reads STKRKEVESKGSTKKKSKTGGTPAGKFKRGK.

The protein belongs to the XPG/RAD2 endonuclease family. FEN1 subfamily. As to quaternary structure, interacts with PCNA. Three molecules of fen1 bind to one PCNA trimer with each molecule binding to one PCNA monomer. PCNA stimulates the nuclease activity without altering cleavage specificity. The cofactor is Mg(2+). Phosphorylated. Phosphorylation upon DNA damage induces relocalization to the nuclear plasma.

Its subcellular location is the nucleus. It localises to the nucleolus. The protein localises to the nucleoplasm. It is found in the mitochondrion. Its function is as follows. Structure-specific nuclease with 5'-flap endonuclease and 5'-3' exonuclease activities involved in DNA replication and repair. During DNA replication, cleaves the 5'-overhanging flap structure that is generated by displacement synthesis when DNA polymerase encounters the 5'-end of a downstream Okazaki fragment. It enters the flap from the 5'-end and then tracks to cleave the flap base, leaving a nick for ligation. Also involved in the long patch base excision repair (LP-BER) pathway, by cleaving within the apurinic/apyrimidinic (AP) site-terminated flap. Acts as a genome stabilization factor that prevents flaps from equilibrating into structures that lead to duplications and deletions. Also possesses 5'-3' exonuclease activity on nicked or gapped double-stranded DNA, and exhibits RNase H activity. Also involved in replication and repair of rDNA and in repairing mitochondrial DNA. This is Flap endonuclease 1-B (fen1-b) from Xenopus laevis (African clawed frog).